We begin with the raw amino-acid sequence, 229 residues long: Vacuolar protein sorting-associated protein 24 homolog 1 (229 aa).

A coiled-coil region spans residues 15–60; sequence KQLLRDWQRKLRQECRNIERQIRDIQKEERNVQKAIKEAAKRNDMV. The segment at 193 to 215 is disordered; it reads VPAQKASTSREEEAVAEGVDDEE. Positions 206-215 are enriched in acidic residues; that stretch reads AVAEGVDDEE.

It belongs to the SNF7 family. In terms of assembly, component of the endosomal sorting required for transport complex III (ESCRT-III), composed at least of VPS2, VPS20, VPS24 and VPS32. Interacts with SKD1.

Its subcellular location is the endosome. In terms of biological role, component of the ESCRT-III complex, which is required for multivesicular bodies (MVBs) formation and sorting of endosomal cargo proteins into MVBs. The ESCRT-III complex is probably involved in the concentration of MVB cargo. In Arabidopsis thaliana (Mouse-ear cress), this protein is Vacuolar protein sorting-associated protein 24 homolog 1 (VPS24-1).